Here is a 415-residue protein sequence, read N- to C-terminus: Tyrosine-protein phosphatase non-receptor type 2 (415 aa).

Positions 5–275 constitute a Tyrosine-protein phosphatase domain; the sequence is IEREFEELDT…RFSYMAIIEG (271 aa). Tyr-22 is subject to Phosphotyrosine. Ser-52 carries the post-translational modification Phosphoserine. Tyr-68 bears the Phosphotyrosine mark. Substrate is bound by residues Asp-182, 216-222, and Gln-260; that span reads CSAGIGR. Cys-216 serves as the catalytic Phosphocysteine intermediate. Cys-216 carries the post-translational modification S-nitrosocysteine. Ser-293, Ser-298, and Ser-304 each carry phosphoserine. The endoplasmic reticulum location stretch occupies residues 346–415; sequence ESALRKRIRE…WTLFFQQNAL (70 aa). The segment at 376–415 is mediates interaction with STX17; it reads ERKRKRWLYWQPILTKMGFMSVILVGAFVGWTLFFQQNAL.

This sequence belongs to the protein-tyrosine phosphatase family. Non-receptor class 1 subfamily. Interacts with RMDN3. Isoform 1 interacts with TMED9. Isoform 1 interacts with STX17; dephosphorylates STX17. Interacts with ITGA1 (via cytoplasmic domain); activates the phosphatase activity towards EGFR. Interacts with TRAF2; probably involved in tumor necrosis factor-mediated signaling. Interacts with MET. Interacts with FAM220A and STAT3; interaction with FAM220A promotes interaction of PTPN2 with transcriptional activator STAT3, leading to dephosphorylation of STAT3 by PTPN2 and negative regulation of STAT3 transcriptional activator activity. In terms of processing, specifically phosphorylated in a cell cycle-dependent manner by cyclin-dependent kinases CDK1 and CDK2. Probably activated through phosphorylation by PKR. Ubiquitously expressed. Isoform 2 is probably the major isoform. Isoform 1 is expressed in T-cells and in placenta.

Its subcellular location is the endoplasmic reticulum. It is found in the endoplasmic reticulum-Golgi intermediate compartment. It localises to the nucleus. The protein resides in the cytoplasm. The protein localises to the cell membrane. It catalyses the reaction O-phospho-L-tyrosyl-[protein] + H2O = L-tyrosyl-[protein] + phosphate. Functionally, non-receptor type tyrosine-specific phosphatase that dephosphorylates receptor protein tyrosine kinases including INSR, EGFR, CSF1R, PDGFR. Also dephosphorylates non-receptor protein tyrosine kinases like JAK1, JAK2, JAK3, Src family kinases, STAT1, STAT3 and STAT6 either in the nucleus or the cytoplasm. Negatively regulates numerous signaling pathways and biological processes like hematopoiesis, inflammatory response, cell proliferation and differentiation, and glucose homeostasis. Plays a multifaceted and important role in the development of the immune system. Functions in T-cell receptor signaling through dephosphorylation of FYN and LCK to control T-cells differentiation and activation. Dephosphorylates CSF1R, negatively regulating its downstream signaling and macrophage differentiation. Negatively regulates cytokine (IL2/interleukin-2 and interferon)-mediated signaling through dephosphorylation of the cytoplasmic kinases JAK1, JAK3 and their substrate STAT1, that propagate signaling downstream of the cytokine receptors. Also regulates the IL6/interleukin-6 and IL4/interleukin-4 cytokine signaling through dephosphorylation of STAT3 and STAT6 respectively. In addition to the immune system, it is involved in anchorage-dependent, negative regulation of EGF-stimulated cell growth. Activated by the integrin ITGA1/ITGB1, it dephosphorylates EGFR and negatively regulates EGF signaling. Dephosphorylates PDGFRB and negatively regulates platelet-derived growth factor receptor-beta signaling pathway and therefore cell proliferation. Negatively regulates tumor necrosis factor-mediated signaling downstream via MAPK through SRC dephosphorylation. May also regulate the hepatocyte growth factor receptor signaling pathway through dephosphorylation of the hepatocyte growth factor receptor MET. Also plays an important role in glucose homeostasis. For instance, negatively regulates the insulin receptor signaling pathway through the dephosphorylation of INSR and control gluconeogenesis and liver glucose production through negative regulation of the IL6 signaling pathways. May also bind DNA. The polypeptide is Tyrosine-protein phosphatase non-receptor type 2 (PTPN2) (Homo sapiens (Human)).